The chain runs to 890 residues: Kinesin-like protein KIN-7C, mitochondrial (890 aa).

Positions 1–13 are enriched in polar residues; it reads MSATRSQRSSTIS. The tract at residues 1 to 66 is disordered; that stretch reads MSATRSQRSS…TSSAAASSTA (66 aa). A mitochondrion-targeting transit peptide spans 1 to 73; that stretch reads MSATRSQRSS…STAVASTKLK (73 aa). Over residues 40–66 the composition is skewed to low complexity; that stretch reads SPVTSSSPLLRSSPSPSTSSAAASSTA. A Kinesin motor domain is found at 75–394; it reads NITVTIRFRP…LKFAQRCKHV (320 aa). Residue 155–162 participates in ATP binding; that stretch reads GVTSSGKT. Residues 395–468 adopt a coiled-coil conformation; that stretch reads EIKASRNKIM…MGRIQRLTKL (74 aa). The segment at 511–595 is disordered; that stretch reads DGAVSTVSEH…TTRRENAAAI (85 aa). The segment covering 569–579 has biased composition (low complexity); sequence SQASGSPSSSS. Coiled-coil stretches lie at residues 664–693 and 729–765; these read HIRD…IIEI and ADNR…LAER. The disordered stretch occupies residues 768–797; it reads TQQIAGDESSGKNIHNRNGEESEIYSGAGT. Residues 818-884 adopt a coiled-coil conformation; that stretch reads NETALNSQAL…AEEVTRLCNE (67 aa).

The protein belongs to the TRAFAC class myosin-kinesin ATPase superfamily. Kinesin family. KIN-7 subfamily.

It is found in the mitochondrion. This is Kinesin-like protein KIN-7C, mitochondrial from Arabidopsis thaliana (Mouse-ear cress).